Consider the following 270-residue polypeptide: Protein ABHD14A (270 aa).

A helical; Signal-anchor for type II membrane protein transmembrane segment spans residues 9 to 29 (LVVLGLVLLATVLLYLLLPSM). N61 carries N-linked (GlcNAc...) asparagine glycosylation. Active-site charge relay system residues include S170 and D221. N-linked (GlcNAc...) asparagine glycosylation occurs at N237. H248 acts as the Charge relay system in catalysis.

This sequence belongs to the AB hydrolase superfamily. ABHD14 family.

Its subcellular location is the cytoplasm. It is found in the membrane. In terms of biological role, possible role in granule neuron development. This chain is Protein ABHD14A, found in Danio rerio (Zebrafish).